We begin with the raw amino-acid sequence, 141 residues long: Large ribosomal subunit protein uL11 (141 aa).

The protein belongs to the universal ribosomal protein uL11 family. In terms of assembly, part of the ribosomal stalk of the 50S ribosomal subunit. Interacts with L10 and the large rRNA to form the base of the stalk. L10 forms an elongated spine to which L12 dimers bind in a sequential fashion forming a multimeric L10(L12)X complex. Post-translationally, one or more lysine residues are methylated.

Its function is as follows. Forms part of the ribosomal stalk which helps the ribosome interact with GTP-bound translation factors. The protein is Large ribosomal subunit protein uL11 of Parasynechococcus marenigrum (strain WH8102).